The following is a 174-amino-acid chain: Ribosome maturation factor RimM (174 aa).

Residues 98–171 enclose the PRC barrel domain; that stretch reads EDEFYFHEII…KIKIHVMEGL (74 aa).

This sequence belongs to the RimM family. Binds ribosomal protein uS19.

The protein localises to the cytoplasm. An accessory protein needed during the final step in the assembly of 30S ribosomal subunit, possibly for assembly of the head region. Essential for efficient processing of 16S rRNA. May be needed both before and after RbfA during the maturation of 16S rRNA. It has affinity for free ribosomal 30S subunits but not for 70S ribosomes. The polypeptide is Ribosome maturation factor RimM (Bacillus velezensis (strain DSM 23117 / BGSC 10A6 / LMG 26770 / FZB42) (Bacillus amyloliquefaciens subsp. plantarum)).